The chain runs to 249 residues: Low affinity immunoglobulin gamma Fc region receptor III-A (249 aa).

A signal peptide spans 1–20 (MWYLLLPTALLLTVSSGVGA). Residues 21 to 203 (GLQKAVVNLD…SPSSFLPWHQ (183 aa)) lie on the Extracellular side of the membrane. Ig-like C2-type domains lie at 31 to 103 (PEWV…QLDV) and 117 to 188 (FQEG…LQIS). Cystine bridges form between Cys46–Cys88 and Cys127–Cys171. N-linked (GlcNAc...) asparagine glycans are attached at residues Asn55 and Asn62. The N-linked (GlcNAc...) asparagine glycan is linked to Asn179. A helical membrane pass occupies residues 204 to 224 (ITFCLLIGLLFAIDTVLYFSV). At 225 to 249 (QRSLQSSVAVYEEPKLHWSKEPQDK) the chain is on the cytoplasmic side. At Tyr235 the chain carries Phosphotyrosine.

As to quaternary structure, forms a heterooligomeric complex with ITAM-containing signaling subunits FCER1G. Interacts (via transmembrane domain) with signaling subunits; this interaction is a prerequisite for receptor complex expression on the cell surface and intracellular signal transduction. Binds the Fc region of antigen-complexed IgG. N-glycosylated. Post-translationally, phosphorylated following receptor ligation.

Its subcellular location is the cell membrane. Functionally, receptor for the invariable Fc fragment of immunoglobulin gamma (IgG). Binds with intermediate affinity to both IgG2a and IgG2b. Can bind to IgG2a and IgG2b monomers. Does not display binding to IgG1 or IgG3. Recognizes neutralizing virus-specific IgGs displayed on the cell surface of infected cells and triggers antibody-dependent cellular cytotoxicity (ADCC). Confers protection to lethal influenza virus infection. On splenic dendritic cells, uptakes antigen immune complexes and efficiently divert them into MHC class I and II antigen presentation pathways to provide for superior priming of CD4-positive and CD8-positive T cell immune responses. Mediates neutrophil activation by IgG complexes redundantly with FCGR2A. Plays a role in promoting bone resorption by enhancing osteoclast differentiation following binding to IgG2a. Also acts as a receptor for the Fc region of immunoglobulin epsilon (IgE). Binds with low affinity to both the a and b allotypes of IgE. Has also been shown to bind to IgE allotype a only but not to allotype b. Binds aggregated IgE but not the monomeric form and bound monomeric IgG is readily displaced by IgE complexes. Binding to IgE promotes macrophage-mediated phagocytosis, antigen presentation to T cells, production of pro-inflammatory cytokines and the late phase of cutaneous allergic reactions. Mediates enhanced ADCC in response to afucosylated IgGs. The protein is Low affinity immunoglobulin gamma Fc region receptor III-A of Rattus norvegicus (Rat).